The chain runs to 116 residues: UPF0342 protein BH1149 (116 aa).

The protein belongs to the UPF0342 family.

In Halalkalibacterium halodurans (strain ATCC BAA-125 / DSM 18197 / FERM 7344 / JCM 9153 / C-125) (Bacillus halodurans), this protein is UPF0342 protein BH1149.